A 201-amino-acid polypeptide reads, in one-letter code: Pectinesterase inhibitor 7 (201 aa).

An N-terminal signal peptide occupies residues 1-24; the sequence is MARNFELSLILFVLYLSTAAIVMA. Intrachain disulfides connect Cys42/Cys51 and Cys108/Cys159.

This sequence belongs to the PMEI family. In terms of assembly, binds reversibly to PME3 to inhibit its activity; the stability of the PME3-PMEI7 complex and the inhibition of the pectin methylesterase (PME) activity is pH-dependent, based on protonation status of amino-acids at the complex interface. Accumulates in etiolated hypocotyls (at protein level).

The protein resides in the secreted. It is found in the extracellular space. It localises to the apoplast. Its subcellular location is the cell wall. Its function is as follows. Pectin methylesterase (PME) inhibitor that can target PME3 in a pH-dependent manner, mainly in slightly acidic conditions (pH 6.0 and 5.0) but not at pH 7.0; this processus relies on changes in the protonation of amino acids involved in intermolecular and intramolecular interactions. Regulates homogalacturonan methylesterification during plant development. This Arabidopsis thaliana (Mouse-ear cress) protein is Pectinesterase inhibitor 7.